The primary structure comprises 654 residues: NADPH-dependent diflavin oxidoreductase 1 (654 aa).

Low complexity predominate over residues 1-10 (MSGSQSSGSP). A disordered region spans residues 1 to 22 (MSGSQSSGSPGSPGPPGPPGRS). The Flavodoxin-like domain maps to 23–167 (ALVVYGSETG…TFIPWLAGFR (145 aa)). Residues 29 to 34 (SETGNA), 76 to 79 (STTG), and 114 to 123 (LGDSSYPKFN) each bind FMN. In terms of domain architecture, FAD-binding FR-type spans 235–485 (HDSLTATLVQ…QLQRGGLNSS (251 aa)). FAD contacts are provided by residues arginine 389, 419–422 (RQFS), and 458–461 (GVCT). NADP(+) is bound by residues threonine 500, 568–569 (SR), and 574–578 (KVYVQ). Residue tryptophan 654 coordinates FAD.

Belongs to the NADPH-dependent diflavin oxidoreductase NDOR1 family. The protein in the N-terminal section; belongs to the flavodoxin family. It in the C-terminal section; belongs to the flavoprotein pyridine nucleotide cytochrome reductase family. As to quaternary structure, interacts with dre2; as part of the cytosolic iron-sulfur (Fe-S) protein assembly (CIA) machinery. It depends on FAD as a cofactor. FMN is required as a cofactor.

It localises to the cytoplasm. The protein resides in the mitochondrion. It carries out the reaction 2 oxidized [2Fe-2S]-[protein] + NADPH = 2 reduced [2Fe-2S]-[protein] + NADP(+) + H(+). In terms of biological role, NADPH-dependent reductase which is a central component of the cytosolic iron-sulfur (Fe-S) protein assembly (CIA) machinery. Transfers electrons from NADPH via its FAD and FMN prosthetic groups to the [2Fe-2S] cluster of dre2, another key component of the CIA machinery. In turn, this reduced cluster provides electrons for assembly of cytosolic iron-sulfur cluster proteins. Positively controls H(2)O(2)-induced cell death. The sequence is that of NADPH-dependent diflavin oxidoreductase 1 from Emericella nidulans (strain FGSC A4 / ATCC 38163 / CBS 112.46 / NRRL 194 / M139) (Aspergillus nidulans).